The primary structure comprises 348 residues: Galanin receptor type 1 (348 aa).

Residues Met1–Phe34 are Extracellular-facing. Asn7 and Asn12 each carry an N-linked (GlcNAc...) asparagine glycan. Residues Ile35–Ile55 traverse the membrane as a helical segment. At Thr56 to Thr70 the chain is on the cytoplasmic side. A helical transmembrane segment spans residues Asn71–Phe91. Topologically, residues Gln92 to Lys109 are extracellular. Cys108 and Cys186 are joined by a disulfide. A helical transmembrane segment spans residues Phe110–Val131. The Cytoplasmic portion of the chain corresponds to Asp132–Asn151. The chain crosses the membrane as a helical span at residues Ala152 to Tyr172. The Extracellular segment spans residues His173–Lys197. Asn182 carries an N-linked (GlcNAc...) asparagine glycan. The chain crosses the membrane as a helical span at residues Ala198 to Cys218. Residues Tyr219–Thr247 are Cytoplasmic-facing. Residues Val248–Trp268 form a helical membrane-spanning segment. The Extracellular segment spans residues Ala269–Glu270. Residues Phe271–Ala291 traverse the membrane as a helical segment. The Cytoplasmic portion of the chain corresponds to Tyr292 to Val348. The S-palmitoyl cysteine moiety is linked to residue Cys319. Positions Ser328–Met337 are enriched in basic and acidic residues. The tract at residues Ser328–Val348 is disordered.

This sequence belongs to the G-protein coupled receptor 1 family. In terms of assembly, interacts with GRP39 AND HTR1A. Post-translationally, three cysteine residues are found in the C-terminus, at least one of which may be palmitoylated. In terms of tissue distribution, expression is detected in brain, spinal cord, heart and skeletal muscle.

It localises to the cell membrane. In terms of biological role, receptor for the hormone galanin. The activity of this receptor is mediated by G proteins that inhibit adenylate cyclase activity. The protein is Galanin receptor type 1 (Galr1) of Mus musculus (Mouse).